The primary structure comprises 224 residues: NBPF family member NBPF6-like protein (224 aa).

Positions 159–224 (ENHHDRKDEE…ASVCDVQDQL (66 aa)) constitute an Olduvai domain. Residues 198 to 209 (YLTHSSHHDSHR) are compositionally biased toward basic and acidic residues. Positions 198-224 (YLTHSSHHDSHRPPSSIASVCDVQDQL) are disordered.

The protein belongs to the NBPF family.

In Bos taurus (Bovine), this protein is NBPF family member NBPF6-like protein.